The sequence spans 306 residues: Aspartate carbamoyltransferase catalytic subunit (306 aa).

Carbamoyl phosphate-binding residues include R54 and T55. K83 contacts L-aspartate. Carbamoyl phosphate contacts are provided by R104, H132, and Q135. L-aspartate-binding residues include R165 and R227. Carbamoyl phosphate-binding residues include L266 and P267.

The protein belongs to the aspartate/ornithine carbamoyltransferase superfamily. ATCase family. Heterododecamer (2C3:3R2) of six catalytic PyrB chains organized as two trimers (C3), and six regulatory PyrI chains organized as three dimers (R2).

The enzyme catalyses carbamoyl phosphate + L-aspartate = N-carbamoyl-L-aspartate + phosphate + H(+). The protein operates within pyrimidine metabolism; UMP biosynthesis via de novo pathway; (S)-dihydroorotate from bicarbonate: step 2/3. Catalyzes the condensation of carbamoyl phosphate and aspartate to form carbamoyl aspartate and inorganic phosphate, the committed step in the de novo pyrimidine nucleotide biosynthesis pathway. This chain is Aspartate carbamoyltransferase catalytic subunit, found in Finegoldia magna (strain ATCC 29328 / DSM 20472 / WAL 2508) (Peptostreptococcus magnus).